We begin with the raw amino-acid sequence, 504 residues long: Protoporphyrinogen oxidase, mitochondrial (504 aa).

FAD-binding positions include 20-25, 43-44, K51, and 65-68; these read GAGVSG, EA, and GANT. Positions 213–232 are disordered; the sequence is SPKNEKKQGPPKTSANKKRQ. Residues V264 and 473 to 475 each bind FAD; that span reads LSV.

Belongs to the protoporphyrinogen/coproporphyrinogen oxidase family. Protoporphyrinogen oxidase subfamily. FAD serves as cofactor.

It is found in the mitochondrion. It catalyses the reaction protoporphyrinogen IX + 3 O2 = protoporphyrin IX + 3 H2O2. It participates in porphyrin-containing compound metabolism; protoporphyrin-IX biosynthesis; protoporphyrin-IX from protoporphyrinogen-IX: step 1/1. With respect to regulation, inhibited by the herbicide acifluorfen. Catalyzes the 6-electron oxidation of protoporphyrinogen-IX to form protoporphyrin-IX. Its function is as follows. Provides precursor for the mitochondrial and plastidic heme synthesis and the predominant chlorophyll synthesis in plastids. The sequence is that of Protoporphyrinogen oxidase, mitochondrial (PPXII) from Nicotiana tabacum (Common tobacco).